The following is a 155-amino-acid chain: UPF0225 protein PC1_1977 (155 aa).

It belongs to the UPF0225 family.

In Pectobacterium carotovorum subsp. carotovorum (strain PC1), this protein is UPF0225 protein PC1_1977.